We begin with the raw amino-acid sequence, 208 residues long: NAD-dependent protein deacylase (208 aa).

Positions 1-208 (MKPICVVLSG…NTGFNPVTGW (208 aa)) constitute a Deacetylase sirtuin-type domain. Residue 10 to 29 (GAGISAESGIPTYRAEDGLW) participates in NAD(+) binding. 2 residues coordinate substrate: tyrosine 54 and arginine 57. 87–90 (QNVE) contacts NAD(+). Histidine 105 serves as the catalytic Proton acceptor. NAD(+) contacts are provided by residues 170–172 (GTS) and 197–199 (NPN).

Belongs to the sirtuin family. Class III subfamily.

Its subcellular location is the cytoplasm. It catalyses the reaction N(6)-acetyl-L-lysyl-[protein] + NAD(+) + H2O = 2''-O-acetyl-ADP-D-ribose + nicotinamide + L-lysyl-[protein]. It carries out the reaction N(6)-succinyl-L-lysyl-[protein] + NAD(+) + H2O = 2''-O-succinyl-ADP-D-ribose + nicotinamide + L-lysyl-[protein]. Its function is as follows. NAD-dependent lysine deacetylase and desuccinylase that specifically removes acetyl and succinyl groups on target proteins. Modulates the activities of several proteins which are inactive in their acylated form. This Aggregatibacter actinomycetemcomitans (Actinobacillus actinomycetemcomitans) protein is NAD-dependent protein deacylase.